A 495-amino-acid chain; its full sequence is Two-component response regulator-like APRR3 (495 aa).

The region spanning 65 to 183 (KVLLVENDDS…ELKNLWQHVW (119 aa)) is the Response regulatory domain. 2 disordered regions span residues 188 to 441 (SSSG…RWAQ) and 465 to 495 (HSRK…SEDN). The segment covering 206–217 (PESTQGSENDAS) has biased composition (polar residues). Positions 231 to 248 (GLSNQDGGSDNGSGTQSS) are enriched in low complexity. Residues 256-265 (TKSTSPSNQF) show a composition bias toward polar residues. The segment covering 284 to 293 (RLKEAEDQKE) has biased composition (basic and acidic residues). Over residues 294–304 (QIGTGSQTGMS) the composition is skewed to polar residues. Basic and acidic residues predominate over residues 307–319 (KKAEEPGDLEKNA). The segment covering 335–350 (NRSSGNSQVESKAPSS) has biased composition (polar residues). Residues 349–372 (SSNREDLQSLEQTLKKTREDRDYK) are a coiled coil. Over residues 351 to 378 (NREDLQSLEQTLKKTREDRDYKVGDRSV) the composition is skewed to basic and acidic residues. 2 stretches are compositionally biased toward polar residues: residues 380-395 (RHSN…NGAT) and 420-436 (GSSS…SSGS). The 43-residue stretch at 442–484 (REAALMKFRLKRKERCFEKKVRYHSRKKLAEQRPHVKGQFIRK) folds into the CCT domain. Positions 483-495 (RKRDDHKSGSEDN) are enriched in basic and acidic residues.

It belongs to the ARR-like family. Interacts with APRR1/TOC1 (via N-terminus). In terms of processing, phosphorylated by WNK1; during the night. Phosphorylation is required for optimal interaction with APRR1/TOC1.

It is found in the nucleus. Functionally, controls photoperiodic flowering response. Component of the circadian clock. Controls the degradation of APRR1/TOC1 by the SCF(ZTL) complex. Expression of several members of the ARR-like family is controlled by circadian rhythm. The particular coordinated sequential expression of APRR9, APRR7, APRR5, APRR3 and APPR1 result to circadian waves that may be at the basis of the endogenous circadian clock. In Arabidopsis thaliana (Mouse-ear cress), this protein is Two-component response regulator-like APRR3 (APRR3).